The sequence spans 225 residues: Membrane protein (225 aa).

Residues 1-20 lie on the Virion surface side of the membrane; that stretch reads MSNETNCTLDFEQSVQLFKE. Residues Asn-3 and Asn-6 are each glycosylated (N-linked (GlcNAc...) asparagine; by host). The helical transmembrane segment at 21–41 threads the bilayer; it reads YNLFITAFLLFLTIILQYGYA. The Intravirion portion of the chain corresponds to 42–51; that stretch reads TRSKVIYTLK. Residues 52 to 72 traverse the membrane as a helical segment; sequence MIVLWCFWPLNIAVGVISCIY. The Virion surface portion of the chain corresponds to 73–77; it reads PPNTG. Residues 78–98 form a helical membrane-spanning segment; it reads GLVAAIILTVFACLSFVGYWI. Over 99-225 the chain is Intravirion; it reads QSIRLFKRCR…VATGGSSLYT (127 aa).

Belongs to the gammacoronaviruses M protein family. Homomultimer. Interacts with envelope E protein in the budding compartment of the host cell, which is located between endoplasmic reticulum and the Golgi complex. Forms a complex with HE and S proteins. Interacts with nucleocapsid N protein. This interaction probably participates in RNA packaging into the virus.

Its subcellular location is the virion membrane. It is found in the host Golgi apparatus membrane. Its function is as follows. Component of the viral envelope that plays a central role in virus morphogenesis and assembly via its interactions with other viral proteins. The polypeptide is Membrane protein (Gallus gallus (Chicken)).